We begin with the raw amino-acid sequence, 225 residues long: MLDYIWLDDESPILQQVPVEYSSAALIFSPFIQMPEGWENAKRKNDYEHIYPNDNEIRGIGKAVSWKKVMSSCGFQTHAELALALMTSIGALRDEFAREDLAEVLHENINGDLYYPSEDHISNFHIPSLVKVLGANGSNRFYYAEPIVENRGVLDITEANLRTVLDEAATELVLTDEKMDFVFMSVYDSFINVFLAKDKNIHELVERMGWEAMICDESTYISWYR.

This is an uncharacterized protein from Bacillus subtilis (strain 168).